The chain runs to 139 residues: Large-conductance mechanosensitive channel (139 aa).

A run of 2 helical transmembrane segments spans residues 17 to 37 and 88 to 108; these read VVDM…VTSL and TVDF…IMAA.

The protein belongs to the MscL family. In terms of assembly, homopentamer.

The protein resides in the cell inner membrane. Its function is as follows. Channel that opens in response to stretch forces in the membrane lipid bilayer. May participate in the regulation of osmotic pressure changes within the cell. The polypeptide is Large-conductance mechanosensitive channel (Porphyromonas gingivalis (strain ATCC 33277 / DSM 20709 / CIP 103683 / JCM 12257 / NCTC 11834 / 2561)).